Here is a 199-residue protein sequence, read N- to C-terminus: Recombination protein RecR (199 aa).

The segment at 58 to 73 adopts a C4-type zinc-finger fold; the sequence is CRTCFSLSDQPECRIC. Positions 81-176 constitute a Toprim domain; the sequence is SIICVVEKPT…NVTRIASGVP (96 aa).

The protein belongs to the RecR family.

Functionally, may play a role in DNA repair. It seems to be involved in an RecBC-independent recombinational process of DNA repair. It may act with RecF and RecO. The protein is Recombination protein RecR of Desulforapulum autotrophicum (strain ATCC 43914 / DSM 3382 / VKM B-1955 / HRM2) (Desulfobacterium autotrophicum).